A 532-amino-acid polypeptide reads, in one-letter code: UDP-glucuronosyltransferase 1A6 (532 aa).

Positions 1–26 (MACLLRSFQRISAGVFFLALWGMVVG) are cleaved as a signal peptide. Residues Asn-294 and Asn-346 are each glycosylated (N-linked (GlcNAc...) asparagine). Residues 490–506 (VIGFLLAVVLTVAFITF) traverse the membrane as a helical segment.

The protein belongs to the UDP-glycosyltransferase family. As to quaternary structure, isoform 1 interacts with isoform 3/i2 suggesting that oligomerization is involved in negative regulation of transferase activity by isoform 3. Isoform 1 also interacts with respective i2 isoforms of UGT1A1, UGT1A3, UGT1A4, UGT1A7, UGT1A8, UGT1A9 and UGT1A10. Expressed in skin. Isoforms 1 and 3 are expressed in kidney and liver. Isoform 1 but not isoform 2 is expressed in colon, esophagus and small intestine.

Its subcellular location is the microsome. It is found in the endoplasmic reticulum membrane. It carries out the reaction glucuronate acceptor + UDP-alpha-D-glucuronate = acceptor beta-D-glucuronoside + UDP + H(+). It catalyses the reaction (5Z,8Z,11Z,14Z)-eicosatetraenoate + UDP-alpha-D-glucuronate = O-[(5Z),(8Z),(11Z),(14Z)-eicosatetraenoyl]-beta-D-glucuronate + UDP. The enzyme catalyses 15-hydroxy-(5Z,8Z,11Z,13E)-eicosatetraenoate + UDP-alpha-D-glucuronate = 15-O-(beta-D-glucuronosyl)-(5Z,8Z,11Z,14Z)-eicosatetraenoate + UDP + H(+). The catalysed reaction is (E)-ferulate + UDP-alpha-D-glucuronate = (E)-4-O-(beta-D-glucuronosyl)-ferulate + UDP + H(+). It carries out the reaction (E)-ferulate + UDP-alpha-D-glucuronate = (E)-ferulic acid beta-D-glucuronate ester + UDP. Its function is as follows. UDP-glucuronosyltransferase (UGT) that catalyzes phase II biotransformation reactions in which lipophilic substrates are conjugated with glucuronic acid to facilitate their inactivation and excretion from the body. Essential for the elimination and detoxification of drugs, xenobiotics and endogenous compounds. Involved in the glucuronidation of arachidonic acid (AA) and AA-derived eicosanoids including 15-HETE and 20-HETE. Conjugates small planar phenolic molecules such as 4-nitrophenol, 1-naphthol, and 4-methylumbelliferone. The bulky phenol 4-hydroxybiphenyl, androgens and estrogens are not substrates. 2-hydroxybiphenyl is an excellent substrate. Involved in the glucuronidation of the phytochemical ferulic acid at the phenolic or the carboxylic acid group. Functionally, isoform 3 lacks transferase activity but acts as a negative regulator of isoform 1. In Homo sapiens (Human), this protein is UDP-glucuronosyltransferase 1A6.